The following is a 93-amino-acid chain: Ferredoxin-2 (93 aa).

Residues 2 to 91 form the 2Fe-2S ferredoxin-type domain; that stretch reads YKVTLKTPDG…DVVIETHKED (90 aa). Residues Cys37, Cys42, Cys45, and Cys75 each coordinate [2Fe-2S] cluster.

Belongs to the 2Fe2S plant-type ferredoxin family. It depends on [2Fe-2S] cluster as a cofactor.

It localises to the plastid. Its subcellular location is the chloroplast. Its function is as follows. Ferredoxins are iron-sulfur proteins that transfer electrons in a wide variety of metabolic reactions. The sequence is that of Ferredoxin-2 from Equisetum telmateia (Great horsetail).